A 435-amino-acid polypeptide reads, in one-letter code: ATP-dependent protease ATPase subunit HslU (435 aa).

Residues Ile18, 60–65 (GVGKTE), Asp248, Glu313, and Arg385 each bind ATP.

Belongs to the ClpX chaperone family. HslU subfamily. As to quaternary structure, a double ring-shaped homohexamer of HslV is capped on each side by a ring-shaped HslU homohexamer. The assembly of the HslU/HslV complex is dependent on binding of ATP.

It is found in the cytoplasm. ATPase subunit of a proteasome-like degradation complex; this subunit has chaperone activity. The binding of ATP and its subsequent hydrolysis by HslU are essential for unfolding of protein substrates subsequently hydrolyzed by HslV. HslU recognizes the N-terminal part of its protein substrates and unfolds these before they are guided to HslV for hydrolysis. The polypeptide is ATP-dependent protease ATPase subunit HslU (Agrobacterium fabrum (strain C58 / ATCC 33970) (Agrobacterium tumefaciens (strain C58))).